Consider the following 154-residue polypeptide: Hexachlorocyclohexane dehydrochlorinase 1 (154 aa).

D25 is an active-site residue. H73 acts as the Proton acceptor in catalysis.

Belongs to the HCH dehydrochlorinase family. Homotrimer.

The protein localises to the periplasm. The enzyme catalyses gamma-hexachlorocyclohexane = (3R,4S,5S,6R)-pentachlorocyclohexene + chloride + H(+). The catalysed reaction is (3R,4S,5S,6R)-pentachlorocyclohexene = (3R,6R)-1,3,4,6-tetrachlorocyclohexa-1,4-diene + chloride + H(+). It functions in the pathway xenobiotic degradation; hexachlorocyclohexane degradation. Functionally, catalyzes the conversion of the important environmental pollutant gamma-hexachlorocyclohexane (gamma-HCH or lindane) to 1,3,4,6-tetrachloro-1,4-cyclohexadiene (1,4-TCDN) via gamma-pentachlorocyclohexene (gamma-PCCH). Proceeds by two successive 1,2-anti conformationally dependent dehydrochlorinations. Also shows activity with alpha- and delta-HCH, giving alpha- and delta-PCCH respectively, but not with the beta isomer. This Sphingobium indicum (strain DSM 16412 / CCM 7286 / MTCC 6364 / B90A) protein is Hexachlorocyclohexane dehydrochlorinase 1.